The chain runs to 245 residues: Acetylglutamate kinase (245 aa).

Substrate-binding positions include G41–G42, R63, and N156.

The protein belongs to the acetylglutamate kinase family. ArgB subfamily.

The protein resides in the cytoplasm. It carries out the reaction N-acetyl-L-glutamate + ATP = N-acetyl-L-glutamyl 5-phosphate + ADP. It functions in the pathway amino-acid biosynthesis; L-arginine biosynthesis; N(2)-acetyl-L-ornithine from L-glutamate: step 2/4. Catalyzes the ATP-dependent phosphorylation of N-acetyl-L-glutamate. The protein is Acetylglutamate kinase of Streptococcus mutans serotype c (strain ATCC 700610 / UA159).